The following is a 370-amino-acid chain: Serine/threonine-protein kinase RIM11/MSD1 (370 aa).

Positions 39–322 constitute a Protein kinase domain; sequence FPTTEVVGHG…ALQCLCSPYF (284 aa). ATP-binding positions include 45-53 and lysine 68; that span reads VGHGSFGVV. Aspartate 164 serves as the catalytic Proton acceptor. Residue tyrosine 199 is modified to Phosphotyrosine.

It belongs to the protein kinase superfamily. CMGC Ser/Thr protein kinase family. GSK-3 subfamily. As to quaternary structure, interacts with TDA1.

It carries out the reaction L-seryl-[protein] + ATP = O-phospho-L-seryl-[protein] + ADP + H(+). It catalyses the reaction L-threonyl-[protein] + ATP = O-phospho-L-threonyl-[protein] + ADP + H(+). Functionally, serine/threonine protein kinase that is thought to function in regulating kinetochore activity and entry into meiosis. Could phosphorylate IME1. The protein is Serine/threonine-protein kinase RIM11/MSD1 (RIM11) of Saccharomyces cerevisiae (strain ATCC 204508 / S288c) (Baker's yeast).